The sequence spans 622 residues: Dopamine beta-hydroxylase (622 aa).

At 1-20 (MQAHLSHQPCWSSLPSPSVR) the chain is on the cytoplasmic side. Residues 21–41 (EAASMYGTAVAIFLVILVAAL) form a helical; Signal-anchor for type II membrane protein membrane-spanning segment. Residues 42–621 (RGSEPPESPF…TVPITTEADA (580 aa)) are Intragranular-facing. One can recognise a DOMON domain in the interval 61-177 (GILELSWNVS…DTVHLVYGIL (117 aa)). 2 N-linked (GlcNAc...) asparagine glycosylation sites follow: Asn-68 and Asn-188. 6 cysteine pairs are disulfide-bonded: Cys-158–Cys-600, Cys-236–Cys-287, Cys-273–Cys-299, Cys-394–Cys-507, Cys-398–Cys-569, and Cys-470–Cys-492. Tyr-234 is a catalytic residue. Positions 266 and 267 each coordinate Cu(2+). His-337 is a binding site for Cu(2+). Ser-350 carries the phosphoserine; by CaMK modification. His-416 is a catalytic residue. Cu(2+) is bound by residues His-416 and His-418. An N-linked (GlcNAc...) asparagine glycan is attached at Asn-476. Cu(2+) is bound at residue Met-491. The N-linked (GlcNAc...) asparagine glycan is linked to Asn-570. Positions 594-622 (EEPTPRCPIRQTQSPANPTVPITTEADAE) are disordered. A compositionally biased stretch (polar residues) spans 603-615 (RQTQSPANPTVPI).

It belongs to the copper type II ascorbate-dependent monooxygenase family. Homotetramer; composed of two disulfide-linked dimers. Cu(2+) serves as cofactor. Proteolytic cleavage after the membrane-anchor leads to the release of the soluble form. In terms of processing, N-glycosylated. Detected in adrenal gland secretory granules (at protein level). Detected in adrenal gland.

It localises to the cytoplasmic vesicle. The protein localises to the secretory vesicle lumen. It is found in the secretory vesicle. Its subcellular location is the chromaffin granule lumen. The protein resides in the secretory vesicle membrane. It localises to the chromaffin granule membrane. The enzyme catalyses dopamine + 2 L-ascorbate + O2 = (R)-noradrenaline + 2 monodehydro-L-ascorbate radical + H2O. It functions in the pathway catecholamine biosynthesis; (R)-noradrenaline biosynthesis; (R)-noradrenaline from dopamine: step 1/1. Its function is as follows. Catalyzes the hydroxylation of dopamine to noradrenaline (also known as norepinephrine), and is thus vital for regulation of these neurotransmitters. This chain is Dopamine beta-hydroxylase (Dbh), found in Mus musculus (Mouse).